The primary structure comprises 554 residues: Bifunctional epoxide hydrolase 2 (554 aa).

A phosphatase region spans residues 1–224; sequence MALRVAAFDL…KVTGTQFPEA (224 aa). Mg(2+) contacts are provided by Asp9 and Asp11. Lys55 carries the N6-succinyllysine modification. Residue 123-124 coordinates phosphate; sequence TN. Position 176 is an N6-acetyllysine; alternate (Lys176). Position 176 is an N6-succinyllysine; alternate (Lys176). Residue Asp185 coordinates Mg(2+). N6-acetyllysine occurs at positions 191 and 215. The segment at 233-554 is epoxide hydrolase; the sequence is NDVSHGYVTV…VQNPSVTSKI (322 aa). The region spanning 257-530 is the AB hydrolase-1 domain; the sequence is PALCLCHGFP…CGHWTQIEKP (274 aa). Catalysis depends on Asp333, which acts as the Nucleophile. The residue at position 368 (Ser368) is a Phosphoserine. Lys371 carries the post-translational modification N6-succinyllysine. Tyr381 is a binding site for substrate. An N6-succinyllysine mark is found at Lys420 and Lys454. The active-site Proton donor is the Tyr465. Position 504 is an N6-succinyllysine (Lys504). N6-acetyllysine; alternate is present on Lys508. Lys508 carries the N6-succinyllysine; alternate modification. The S-(15-deoxy-Delta12,14-prostaglandin J2-9-yl)cysteine moiety is linked to residue Cys521. Residue His523 is the Proton acceptor of the active site. The short motif at 552 to 554 is the Microbody targeting signal element; the sequence is SKI. Position 553 is an N6-succinyllysine (Lys553).

Belongs to the AB hydrolase superfamily. Epoxide hydrolase family. As to quaternary structure, homodimer. It depends on Mg(2+) as a cofactor. In terms of processing, the N-terminus is blocked. Post-translationally, the covalent modification of cysteine by 15-deoxy-Delta12,14-prostaglandin-J2 is autocatalytic and reversible. It may occur as an alternative to other cysteine modifications, such as S-nitrosylation and S-palmitoylation. As to expression, detected in liver, intestine, ovary and kidney. Detected at low levels in heart and muscle.

Its subcellular location is the cytoplasm. The protein resides in the peroxisome. It carries out the reaction an epoxide + H2O = an ethanediol. The catalysed reaction is (9S,10S)-10-hydroxy-9-(phosphooxy)octadecanoate + H2O = (9S,10S)-9,10-dihydroxyoctadecanoate + phosphate. The enzyme catalyses 8-hydroxy-(11S,12S)-epoxy-(5Z,9E,14Z)-eicosatrienoate + H2O = (8,11R,12S)-trihydroxy-(5Z,9E,14Z)-eicosatrienoate. It catalyses the reaction 10-hydroxy-(11S,12S)-epoxy- (5Z,8Z,14Z)-eicosatrienoate + H2O = (10,11S,12R)-trihydroxy-(5Z,8Z,14Z)-eicosatrienoate. It carries out the reaction (8S,9R)-epoxy-(5Z,11Z,14Z)-eicosatrienoate + H2O = (8S,9S)-dihydroxy-(5Z,11Z,14Z)-eicosatrienoate. The catalysed reaction is (11S,12R)-epoxy-(5Z,8Z,14Z)-eicosatrienoate + H2O = (11R,12R)-dihydroxy-(5Z,8Z,14Z)-eicosatrienoate. The enzyme catalyses (11S,12R)-epoxy-(5Z,8Z,14Z)-eicosatrienoate + H2O = (11S,12S)-dihydroxy-(5Z,8Z,14Z)-eicosatrienoate. It catalyses the reaction (14S,15R)-epoxy-(5Z,8Z,11Z)-eicosatrienoate + H2O = (14R,15R)-dihydroxy-(5Z,8Z,11Z)-eicosatrienoate. It carries out the reaction (14S,15R)-epoxy-(5Z,8Z,11Z)-eicosatrienoate + H2O = (14S,15S)-dihydroxy-(5Z,8Z,11Z)-eicosatrienoate. The catalysed reaction is (11R,12S)-epoxy-(5Z,8Z,14Z)-eicosatrienoate + H2O = (11S,12S)-dihydroxy-(5Z,8Z,14Z)-eicosatrienoate. The enzyme catalyses (11R,12S)-epoxy-(5Z,8Z,14Z)-eicosatrienoate + H2O = (11R,12R)-dihydroxy-(5Z,8Z,14Z)-eicosatrienoate. It catalyses the reaction (8S,9R)-epoxy-(5Z,11Z,14Z)-eicosatrienoate + H2O = (8R,9R)-dihydroxy-(5Z,11Z,14Z)-eicosatrienoate. It carries out the reaction 12-phosphooxy-(9Z)-octadecenoate + H2O = 12-hydroxy-(9Z)-octadecenoate + phosphate. The catalysed reaction is 12-phosphooxy-(9E)-octadecenoate + H2O = 12-hydroxy-(9E)-octadecenoate + phosphate. The enzyme catalyses 12-(phosphooxy)octadecanoate + H2O = 12-hydroxyoctadecanoate + phosphate. It catalyses the reaction 8,9-epoxy-(5Z,11Z,14Z)-eicosatrienoate + H2O = 8,9-dihydroxy-(5Z,11Z,14Z)-eicosatrienoate. It carries out the reaction 11,12-epoxy-(5Z,8Z,14Z)-eicosatrienoate + H2O = 11,12-dihydroxy-(5Z,8Z,14Z)-eicosatrienoate. The catalysed reaction is 14,15-epoxy-(5Z,8Z,11Z)-eicosatrienoate + H2O = 14,15-dihydroxy-(5Z,8Z,11Z)-eicosatrienoate. The enzyme catalyses 9,10-epoxy-(12Z)-octadecenoate + H2O = 9,10-dihydroxy-(12Z)-octadecenoate. It catalyses the reaction 1-tetradecanoyl-sn-glycerol 3-phosphate + H2O = 1-tetradecanoyl-sn-glycerol + phosphate. It carries out the reaction 1-octadecanoyl-sn-glycero-3-phosphate + H2O = 1-octadecanoyl-sn-glycerol + phosphate. The catalysed reaction is 1-(5Z,8Z,11Z,14Z-eicosatetraenoyl)-sn-glycero-3-phosphate + H2O = 1-(5Z,8Z,11Z,14Z-eicosatetraenoyl)-sn-glycerol + phosphate. The enzyme catalyses 1-hexadecanoyl-sn-glycero-3-phosphate + H2O = 1-hexadecanoyl-sn-glycerol + phosphate. It catalyses the reaction 1-(9Z-octadecenoyl)-sn-glycero-3-phosphate + H2O = 1-(9Z-octadecenoyl)-sn-glycerol + phosphate. It carries out the reaction (14R,15S)-epoxy-(5Z,8Z,11Z)-eicosatrienoate + H2O = (14R,15R)-dihydroxy-(5Z,8Z,11Z)-eicosatrienoate. With respect to regulation, inhibited by 1-(1-acetylpiperidin-4-yl)-3-(4-(trifl uoromethoxy)phenyl)urea (TPAU), 1-cyclohexyl-3-dodecylurea (CDU), 12-(3-adamantan-1-yl-ureido)-dodecanoic acid (AUDA), 1-((3S, 5S, 7S)-adamantan-1-yl)-3-(5-(2-(2-ethoxyethoxy) ethoxy)pentyl)urea (AEPU), N-adamantyl-N[']-cyclohexyl urea (ACU), 4-(((1S, 4S)-4-(3-((3S, 5S, 7S)-adamantan-1-yl) ureido)cyclohexyl)oxy)benzoic acid (c-AUCB), 4-(((1R, 4R)-4-(3-((3S, 5S, 7S)-adamantan-1-yl)ureido)cyclohexyl)oxy)benzoic acid (t-AUCB), 4-(((1R, 4R)-4-(3-(4(trifluoromethoxy)phenyl)ureido)cyclohexyl)oxy)benzoic acid (t-TAUCB) and to a lesser extent by 8-(3-((3S, 5S, 7S)-adamantan-1-yl)ureido) octanoic acid (AUOA). Phosphatase activity is inhibited by dodecyl-phosphate, phospholipids such as phospho-lysophosphatidic acids and fatty acids such as palmitic acid and lauric acid. In terms of biological role, bifunctional enzyme. The C-terminal domain has epoxide hydrolase activity and acts on epoxides (alkene oxides, oxiranes) and arene oxides. Plays a role in xenobiotic metabolism by degrading potentially toxic epoxides. Also determines steady-state levels of physiological mediators. Its function is as follows. Bifunctional enzyme. The N-terminal domain has lipid phosphatase activity, with the highest activity towards threo-9,10-phosphonooxy-hydroxy-octadecanoic acid, followed by erythro-9,10-phosphonooxy-hydroxy-octadecanoic acid, 12-phosphonooxy-octadec-9Z-enoic acid and 12-phosphonooxy-octadec-9E-enoic acid. Has phosphatase activity toward lyso-glycerophospholipids with also some lower activity toward lysolipids of sphingolipid and isoprenoid phosphates. This chain is Bifunctional epoxide hydrolase 2, found in Mus musculus (Mouse).